Here is a 212-residue protein sequence, read N- to C-terminus: Thymidylate kinase (212 aa).

An N-acetylalanine modification is found at alanine 2. Residues 16 to 21 (RAGKTT) and arginine 97 each bind ATP. Residues 133-157 (LQLQLLDAAARGEFGLERYETGTFQ) are LID. ATP is bound by residues lysine 182 and arginine 192.

It belongs to the thymidylate kinase family. In terms of assembly, homodimer. The cofactor is Mg(2+).

It catalyses the reaction dTMP + ATP = dTDP + ADP. It participates in pyrimidine metabolism; dTTP biosynthesis. Catalyzes the phosphorylation of thymidine monophosphate (dTMP) to thymidine diphosphate (dTDP), the immediate precursor for the DNA building block dTTP, with ATP as the preferred phosphoryl donor in the presence of Mg(2+). This chain is Thymidylate kinase (Dtymk), found in Mus musculus (Mouse).